The primary structure comprises 291 residues: Quinol oxidase subunit 2 (291 aa).

Positions 1 to 28 (MQLKKAFWKLASLLPLSLLLFLGGCDKK) are cleaved as a signal peptide. Helical transmembrane passes span 49–69 (SFLLMSLIIAIVFILFTVILI) and 91–111 (LEIIWTLVPVIIVIALSIPTV).

It belongs to the cytochrome c oxidase subunit 2 family.

The protein resides in the cell membrane. The enzyme catalyses 2 a quinol + O2 = 2 a quinone + 2 H2O. In terms of biological role, catalyzes quinol oxidation with the concomitant reduction of oxygen to water. Subunit II transfers the electrons from a quinol to the binuclear center of the catalytic subunit I. The sequence is that of Quinol oxidase subunit 2 from Bacillus anthracis.